We begin with the raw amino-acid sequence, 181 residues long: MDDLTAQALKDFTARYCDAWHEEHKSWPLSEELYGVPSPCIISTTEDAVYWQPQPFTGEQNVNAVERAFDIVIQPTIHTFYTTQFAGDMHAQFGDIKLTLLQTWSEDDFRRVQENLIGHLVTQKRLKLPPTLFIATLEEELEVISVCNLSGEVCKETLGTRKRTNLASNLAEFLNQLKPLL.

It belongs to the Syd family.

It localises to the cell inner membrane. Its function is as follows. Interacts with the SecY protein in vivo. May bind preferentially to an uncomplexed state of SecY, thus functioning either as a chelating agent for excess SecY in the cell or as a regulatory factor that negatively controls the translocase function. This is Protein Syd from Shigella flexneri.